The sequence spans 707 residues: Caprin-1 (707 aa).

Composition is skewed to low complexity over residues 1 to 15 (MPSA…SKSS) and 22 to 43 (GSSG…PATG). The tract at residues 1–48 (MPSATSHSGSGSKSSGPPPPSGSSGSEAAAGAAAPASQHPATGTGAVQ) is disordered. Pro-2 bears the N-acetylproline mark. Phosphoserine is present on Ser-10. Residues 58–92 (VIDKKLRNLEKKKGKLDDYQERMNKGERLNQDQLD) are a coiled coil. Phosphoserine is present on Ser-113. Residues 123-151 (KTIKKTARREQLMREEAEQKRLKTVLELQ) adopt a coiled-coil conformation. Residue Arg-163 is modified to Omega-N-methylarginine. The interval 325–347 (LQQQPQAASPSVPEPHSLTPVAQ) is disordered. A compositionally biased stretch (low complexity) spans 326–335 (QQQPQAASPS). Phosphoserine occurs at positions 333 and 341. Positions 358–379 (QDLMAQMQGPYNFIQDSMLDFE) are G3BP1-binding. 3 disordered regions span residues 412-443 (ESRL…YTAS), 523-558 (PVPP…EQTE), and 570-620 (TYHG…RGLM). The span at 431–443 (PLVSSTSEGYTAS) shows a compositional bias: polar residues. Over residues 535–558 (QQSQYQASYNQSFSSQPHQVEQTE) the composition is skewed to low complexity. Positions 572–603 (HGSQDQPHQVPGNHQQPPQQSTGFPRSSQPYY) are enriched in polar residues. Tyr-623 is subject to Phosphotyrosine. Arg-624 and Arg-631 each carry omega-N-methylarginine. 2 positions are modified to phosphotyrosine: Tyr-634 and Tyr-637. Omega-N-methylarginine is present on Arg-638. Polar residues predominate over residues 641–655 (FSNTPNSGYTQSQFN). Residues 641-707 (FSNTPNSGYT…MPQMNTQQVN (67 aa)) form a disordered region. Residues Ser-642 and Ser-647 are each glycosylated (O-linked (GlcNAc) serine). Phosphotyrosine occurs at positions 649, 660, 663, and 668. Low complexity-rich tracts occupy residues 674–684 (RGSGQSGPRGA) and 695–707 (NRGM…QQVN). Asymmetric dimethylarginine; alternate is present on Arg-696. An Omega-N-methylarginine; alternate modification is found at Arg-696.

It belongs to the caprin family. May form homomultimers. Interacts with G3BP1; interaction is direct and promotes stress granule formation. Interacts with G3BP2; interaction is direct and promotes stress granule formation. Interacts with PQBP1. Interacts with DDX3X. Interacts (when phosphorylated by EPHA4) with FMR1; interaction with FMR1 promotes formation of a membraneless compartment. Tyrosine phosphorylation by EPHA4 promotes interaction with FMR1 and liquid-liquid phase separation (LLPS) for the formation of a membraneless compartment that concentrates mRNAs with associated regulatory factors. In terms of processing, O-glycosylated (O-GlcNAcylated), in a cell cycle-dependent manner. O-glycosylation by OGT inhibit ability to undergo liquid-liquid phase separation (LLPS). Expressed in hippocampal and neocortical pyramidal neurons, but not in Purkinje cells.

The protein localises to the cytoplasm. The protein resides in the cytoplasmic ribonucleoprotein granule. Its subcellular location is the cytosol. It is found in the cell projection. It localises to the dendrite. The protein localises to the lamellipodium. Ability to mediate liquid-liquid phase separation is regulated by ATP: moderate concentrations of ATP enhance phase separation, whereas high concentrations of ATP lead to inhibition of phase separation. In terms of biological role, mRNA-binding protein that acts as a regulator of mRNAs transport, translation and/or stability, and which is involved in neurogenesis, synaptic plasticity in neurons and cell proliferation and migration in multiple cell types. Plays an essential role in cytoplasmic stress granule formation. Acts as an mRNA regulator by mediating formation of some phase-separated membraneless compartment: undergoes liquid-liquid phase separation upon binding to target mRNAs, leading to assemble mRNAs into cytoplasmic ribonucleoprotein granules that concentrate mRNAs with associated regulatory factors. Undergoes liquid-liquid phase separation following phosphorylation and interaction with FMR1, promoting formation of cytoplasmic ribonucleoprotein granules that concentrate mRNAs with factors that inhibit translation and mediate deadenylation of target mRNAs. In these cytoplasmic ribonucleoprotein granules, CAPRIN1 mediates recruitment of CNOT7 deadenylase, leading to mRNA deadenylation and degradation. Binds directly and selectively to MYC and CCND2 mRNAs. In neuronal cells, directly binds to several mRNAs associated with RNA granules, including BDNF, CAMK2A, CREB1, MAP2, NTRK2 mRNAs, as well as to GRIN1 and KPNB1 mRNAs, but not to rRNAs. The sequence is that of Caprin-1 (Caprin1) from Rattus norvegicus (Rat).